The sequence spans 80 residues: Calmodulin (80 aa).

2 EF-hand domains span residues 12 to 47 (DSEEEIREAFRVFDKDGNGFISAAELRHVMTNLGEK) and 48 to 80 (LTDEEVDEMIREADIDGDGQVNYEEFVAMMTSK). Residues Asp25, Asp27, Asn29, Glu36, Asp61, Asp63, Asp65, Gln67, and Glu72 each contribute to the Ca(2+) site.

This sequence belongs to the calmodulin family.

Functionally, calmodulin mediates the control of a large number of enzymes, ion channels and other proteins by Ca(2+). Among the enzymes to be stimulated by the calmodulin-Ca(2+) complex are a number of protein kinases and phosphatases. This chain is Calmodulin, found in Strongylocentrotus purpuratus (Purple sea urchin).